The sequence spans 748 residues: Phosphoenolpyruvate-dependent phosphotransferase system (748 aa).

One can recognise a GAF domain in the interval 1–127 (MLTRLREIVE…RRQLLGVLVV (127 aa)). Residues 128–170 (QQRELRQYDESEESFLVTLATQMAAILSQSQVTALFGQYRQTR) are linker. The segment at 171–748 (IRALPAAPGV…GMGGLIRGGL (578 aa)) is PTS EI. His-356 (tele-phosphohistidine intermediate) is an active-site residue. Residues Arg-462 and Arg-498 each coordinate phosphoenolpyruvate. Positions 597 and 621 each coordinate Mg(2+). Phosphoenolpyruvate-binding positions include 620 to 621 (ND) and Arg-631. Cys-668 functions as the Proton donor in the catalytic mechanism.

It belongs to the PEP-utilizing enzyme family. The cofactor is Mg(2+).

The protein localises to the cytoplasm. It catalyses the reaction L-histidyl-[protein] + phosphoenolpyruvate = N(pros)-phospho-L-histidyl-[protein] + pyruvate. Component of the phosphoenolpyruvate-dependent nitrogen-metabolic phosphotransferase system (nitrogen-metabolic PTS), that seems to be involved in regulating nitrogen metabolism. Enzyme I-Ntr transfers the phosphoryl group from phosphoenolpyruvate (PEP) to the phosphoryl carrier protein (NPr). Could function in the transcriptional regulation of sigma-54 dependent operons in conjunction with the NPr (PtsO) and EIIA-Ntr (PtsN) proteins. Enzyme I-Ntr is specific for NPr. The polypeptide is Phosphoenolpyruvate-dependent phosphotransferase system (ptsP) (Salmonella typhimurium (strain LT2 / SGSC1412 / ATCC 700720)).